The following is an 89-amino-acid chain: Small ribosomal subunit protein uS17 (89 aa).

It belongs to the universal ribosomal protein uS17 family. In terms of assembly, part of the 30S ribosomal subunit.

In terms of biological role, one of the primary rRNA binding proteins, it binds specifically to the 5'-end of 16S ribosomal RNA. This is Small ribosomal subunit protein uS17 from Ralstonia pickettii (strain 12J).